The primary structure comprises 427 residues: Adenylosuccinate synthetase (427 aa).

Residues 11 to 17 and 39 to 41 each bind GTP; these read GDEGKGK and GHT. The active-site Proton acceptor is the D12. The Mg(2+) site is built by D12 and G39. IMP-binding positions include 12 to 15, 37 to 40, T132, R146, Q223, T238, and R302; these read DEGK and NAGH. Catalysis depends on H40, which acts as the Proton donor. 298–304 contributes to the substrate binding site; that stretch reads TTTGRPR. GTP is bound by residues R304, 330 to 332, and 412 to 414; these read KLD and GVG.

It belongs to the adenylosuccinate synthetase family. Homodimer. It depends on Mg(2+) as a cofactor.

The protein localises to the cytoplasm. It carries out the reaction IMP + L-aspartate + GTP = N(6)-(1,2-dicarboxyethyl)-AMP + GDP + phosphate + 2 H(+). Its pathway is purine metabolism; AMP biosynthesis via de novo pathway; AMP from IMP: step 1/2. Functionally, plays an important role in the de novo pathway and in the salvage pathway of purine nucleotide biosynthesis. Catalyzes the first committed step in the biosynthesis of AMP from IMP. The polypeptide is Adenylosuccinate synthetase (purA) (Dictyostelium discoideum (Social amoeba)).